A 496-amino-acid chain; its full sequence is Mothers against decapentaplegic homolog 6 (496 aa).

A compositionally biased stretch (basic residues) spans 1–15 (MFRSKRSGLVRRLWR). Disordered stretches follow at residues 1–116 (MFRS…PGWL) and 136–156 (GAPR…AGGG). 2 positions are modified to dimethylated arginine; alternate: R75 and R82. An omega-N-methylarginine; alternate mark is found at R75 and R82. Residues 148–275 (AALEPAGGGR…FSRLCGPESP (128 aa)) form the MH1 domain. K173 participates in a covalent cross-link: Glycyl lysine isopeptide (Lys-Gly) (interchain with G-Cter in ubiquitin). Positions 205, 247, 260, and 265 each coordinate Zn(2+). The 166-residue stretch at 331–496 (WCSVAYWEHR…WLEILLNNPR (166 aa)) folds into the MH2 domain. Phosphoserine; by PRKX; in vitro is present on S435.

Belongs to the dwarfin/SMAD family. Interacts with NEDD4L. Interacts with WWP1. Interacts with STAMBP and PRKX. Interacts with RNF111 and AXIN1. Interacts with TGF-beta type I receptor superfamily members, including ACVR1B, BMPR1B and TGFBR1. In response to BMP2, but not to TGFB treatment, interacts with SMAD1, but not with SMAD2, nor with SMAD4; this interaction may inhibit SMAD1 binding to SMAD4. Interacts with HOXC8 and HOXC9. Interacts with PELI1; this interaction interferes with PELI1 complex formation with TRAF6, IRAK1, IRAK4 and MYD88 in response to IL1B and hence negatively regulates IL1R-TLR signaling. Interacts with TSC22D1/TSC-22. Phosphorylated by BMP type 1 receptor kinase and by PRKX. In terms of processing, monoubiquitinated at Lys-173 by the E2/E3 hybrid ubiquitin-protein ligase UBE2O, leading to reduced binding affinity for the activated BMP type I receptor ACVR1/ALK2, thereby enhancing BMP7 and regulating adipocyte differentiation. Ubiquitinated by WWP1. Ubiquitinated by ARK2C, promoting proteasomal degradation, leading to enhance the BMP-Smad signaling. Post-translationally, arginine methylation by PRMT1, which is recruited by BMPR2, initiates BMP-Induced signaling and induces dissociation from the BMPR1B receptor at the cell surface leading to derepress downstream Smad1/Smad5 signaling. Expressed in the brain, heart, ovary, peripheral blood leukocytes, small intestine, spleen, thymus, bone marrow, fetal liver and lymph nodes.

The protein localises to the nucleus. Transforming growth factor-beta superfamily receptors signaling occurs through the Smad family of intracellular mediators. SMAD6 is an inhibitory Smad (i-Smad) that negatively regulates signaling downstream of type I transforming growth factor-beta. Acts as a mediator of TGF-beta and BMP anti-inflammatory activities. Suppresses IL1R-TLR signaling through its direct interaction with PEL1, preventing NF-kappa-B activation, nuclear transport and NF-kappa-B-mediated expression of pro-inflammatory genes. Blocks the BMP-SMAD1 signaling pathway by competing with SMAD4 for receptor-activated SMAD1-binding. Binds to regulatory elements in target promoter regions. The protein is Mothers against decapentaplegic homolog 6 (SMAD6) of Homo sapiens (Human).